The sequence spans 364 residues: Methylthioribose-1-phosphate isomerase (364 aa).

Substrate is bound by residues 53–55 (RGA), arginine 90, and glutamine 203. Aspartate 244 functions as the Proton donor in the catalytic mechanism. A substrate-binding site is contributed by 254–255 (NK).

It belongs to the eIF-2B alpha/beta/delta subunits family. MtnA subfamily.

It carries out the reaction 5-(methylsulfanyl)-alpha-D-ribose 1-phosphate = 5-(methylsulfanyl)-D-ribulose 1-phosphate. It functions in the pathway amino-acid biosynthesis; L-methionine biosynthesis via salvage pathway; L-methionine from S-methyl-5-thio-alpha-D-ribose 1-phosphate: step 1/6. Catalyzes the interconversion of methylthioribose-1-phosphate (MTR-1-P) into methylthioribulose-1-phosphate (MTRu-1-P). This is Methylthioribose-1-phosphate isomerase from Brucella anthropi (strain ATCC 49188 / DSM 6882 / CCUG 24695 / JCM 21032 / LMG 3331 / NBRC 15819 / NCTC 12168 / Alc 37) (Ochrobactrum anthropi).